Here is a 449-residue protein sequence, read N- to C-terminus: Keratin, type I cytoskeletal 27 (449 aa).

The segment at 1-73 (MSVRFSSASR…VNEHGLLSGN (73 aa)) is head. The tract at residues 74-109 (EKVTMQNLNDRLASYLENVQALEEANADLEQKIKDW) is coil 1A. In terms of domain architecture, IF rod spans 74–389 (EKVTMQNLND…LLIGGDEGSC (316 aa)). Residues 110-131 (YEKFGPGSCRGLDHDYSRYFPI) form a linker 1 region. A coil 1B region spans residues 132-223 (IDDLRTQIIS…KNHEEEMQAL (92 aa)). Residues 224-246 (QCAAGGNVNVEMNAAPGVDLTVL) form a linker 12 region. The coil 2 stretch occupies residues 247 to 385 (LNNMRAEYEA…ETYCLLIGGD (139 aa)). Positions 386 to 449 (EGSCVKSKGQ…NNKNEQRIPS (64 aa)) are tail. The interval 425–449 (LSSRVHTLEEKSTKVNNKNEQRIPS) is disordered. Residues 430–449 (HTLEEKSTKVNNKNEQRIPS) are compositionally biased toward basic and acidic residues.

This sequence belongs to the intermediate filament family. Heterotetramer of two type I and two type II keratins. Interacts with KRT6A to form filaments.

The protein localises to the cytoplasm. Its function is as follows. Essential for the proper assembly of type I and type II keratin protein complexes and formation of keratin intermediate filaments in the inner root sheath (irs). This is Keratin, type I cytoskeletal 27 from Rattus norvegicus (Rat).